The following is a 522-amino-acid chain: GMP synthase [glutamine-hydrolyzing] (522 aa).

One can recognise a Glutamine amidotransferase type-1 domain in the interval 9-204 (KILILDFGAQ…VVDICGCQML (196 aa)). Catalysis depends on Cys-86, which acts as the Nucleophile. Residues His-178 and Glu-180 contribute to the active site. The region spanning 205–397 (WTAANIIEDQ…LGLPHAMVYR (193 aa)) is the GMPS ATP-PPase domain. 232–238 (SGGVDSS) is a binding site for ATP.

In terms of assembly, homodimer.

It catalyses the reaction XMP + L-glutamine + ATP + H2O = GMP + L-glutamate + AMP + diphosphate + 2 H(+). Its pathway is purine metabolism; GMP biosynthesis; GMP from XMP (L-Gln route): step 1/1. Functionally, catalyzes the synthesis of GMP from XMP. In Xylella fastidiosa (strain 9a5c), this protein is GMP synthase [glutamine-hydrolyzing] (guaA).